The chain runs to 260 residues: Thiazole synthase (260 aa).

Catalysis depends on Lys96, which acts as the Schiff-base intermediate with DXP. 1-deoxy-D-xylulose 5-phosphate contacts are provided by residues Gly157, 184 to 185 (AG), and 206 to 207 (NT).

The protein belongs to the ThiG family. Homotetramer. Forms heterodimers with either ThiH or ThiS.

Its subcellular location is the cytoplasm. The enzyme catalyses [ThiS sulfur-carrier protein]-C-terminal-Gly-aminoethanethioate + 2-iminoacetate + 1-deoxy-D-xylulose 5-phosphate = [ThiS sulfur-carrier protein]-C-terminal Gly-Gly + 2-[(2R,5Z)-2-carboxy-4-methylthiazol-5(2H)-ylidene]ethyl phosphate + 2 H2O + H(+). The protein operates within cofactor biosynthesis; thiamine diphosphate biosynthesis. Functionally, catalyzes the rearrangement of 1-deoxy-D-xylulose 5-phosphate (DXP) to produce the thiazole phosphate moiety of thiamine. Sulfur is provided by the thiocarboxylate moiety of the carrier protein ThiS. In vitro, sulfur can be provided by H(2)S. The protein is Thiazole synthase of Bradyrhizobium diazoefficiens (strain JCM 10833 / BCRC 13528 / IAM 13628 / NBRC 14792 / USDA 110).